We begin with the raw amino-acid sequence, 318 residues long: Nodulation protein D 2 (318 aa).

Positions 6–63 (LDLNLLVALDALTTERNLTAAARSINLSQPAMSAAIGRLRDYFRDELFTMNGRELRLT) constitute an HTH lysR-type domain. The segment at residues 23-42 (LTAAARSINLSQPAMSAAIG) is a DNA-binding region (H-T-H motif).

It belongs to the LysR transcriptional regulatory family.

In terms of biological role, nodD regulates the expression of the nodABCFE genes which encode other nodulation proteins. NodD is also a negative regulator of its own expression. Binds flavonoids as inducers. In Rhizobium leguminosarum bv. phaseoli, this protein is Nodulation protein D 2 (nodD2).